We begin with the raw amino-acid sequence, 244 residues long: Protein DMP9 (244 aa).

The disordered stretch occupies residues M1 to R56. Residues P18–S29 are compositionally biased toward pro residues. Over residues P30–A45 the composition is skewed to low complexity. 4 helical membrane-spanning segments follow: residues M71–I91, G99–F119, L173–F193, and V213–P233.

It belongs to the plant DMP1 protein family. Restricted to flowers and pollen.

The protein resides in the endoplasmic reticulum membrane. The protein localises to the vacuole membrane. Involved in membrane remodeling. This chain is Protein DMP9, found in Arabidopsis thaliana (Mouse-ear cress).